The chain runs to 245 residues: Fibroblast growth factor 13 (245 aa).

Residues 1 to 36 (MAAAIASSLIRQKRQAREREKSNACKCVSSPSKGKT) are disordered. The mediates targeting to the nucleus stretch occupies residues 1 to 62 (MAAAIASSLI…GSKKRRRRRP (62 aa)). Residues 67–201 (KGIVTKLYSR…AHFLPKPLKV (135 aa)) are mediates interaction with sodium channels. The tract at residues 157 to 164 (SMIYRQQQ) is tubulin-binding domain necessary and sufficient for tubulin-binding. Ser-208 carries the post-translational modification Phosphoserine. The tract at residues 213–245 (TEFSRSGSGTPTKSRSVSGVLNGGKSMSHNEST) is disordered. Polar residues predominate over residues 215–245 (FSRSGSGTPTKSRSVSGVLNGGKSMSHNEST).

This sequence belongs to the heparin-binding growth factors family. Interacts with SCN8A; regulates SCN8A activity. Interacts with SCN1A; may regulate SCN1A activity. Interacts with SCN5A; the interaction is direct and may regulate SNC5A density at membranes and function. May also interact with SCN2A and SCN11A. Interacts with MAPK8IP2; may regulate the MAPK8IP2 scaffolding activity. May be phosphorylated. In terms of tissue distribution, detected in brain, eye and heart. In brain, the different isoforms display different patterns of expression. Expressed in brain and heart (at protein level). Isoform 3 is highly expressed in cardiac myocytes while isoform 1 is the most abundant in brain.

It is found in the cell projection. Its subcellular location is the filopodium. The protein resides in the growth cone. The protein localises to the dendrite. It localises to the cell membrane. It is found in the sarcolemma. Its subcellular location is the cytoplasm. The protein resides in the nucleus. In terms of biological role, microtubule-binding protein which directly binds tubulin and is involved in both polymerization and stabilization of microtubules. Through its action on microtubules, may participate to the refinement of axons by negatively regulating axonal and leading processes branching. Plays a crucial role in neuron polarization and migration in the cerebral cortex and the hippocampus. Regulates voltage-gated sodium channel transport and function. May also play a role in MAPK signaling. Required for the development of axonal initial segment-targeting inhibitory GABAergic synapses made by chandelier neurons. Functionally, seems not to be involved in neuroblast polarization and migration but regulates axon branching. In Mus musculus (Mouse), this protein is Fibroblast growth factor 13.